Reading from the N-terminus, the 255-residue chain is Zinc-finger homeodomain protein 6 (255 aa).

Positions 1 to 35 are disordered; sequence MEFRGHDEPVDEMGVAYGRTPPSSSSSPAASASAG. Over residues 21–35 the composition is skewed to low complexity; that stretch reads PPSSSSSPAASASAG. The ZF-HD dimerization-type; degenerate zinc finger occupies 45 to 93; the sequence is YHECLRNHAAAMGGHVVDGCREFMPMPGDAADALKCAACGCHRSFHRKD. Residues 106 to 126 show a composition bias toward pro residues; that stretch reads PSPPTPRVPLLMPPPQPQPHP. 2 disordered regions span residues 106–181 and 226–255; these read PSPP…KFTP and NNKS…QQQQ. A compositionally biased stretch (low complexity) spans 139 to 153; that stretch reads YHHTPSGSGGTTTES. The segment at residues 172–235 is a DNA-binding region (homeobox); sequence RKRFRTKFTP…NNKSSIGSSS (64 aa). Residues 240–255 show a composition bias toward low complexity; sequence RRQPQEQQSQQQQQQQ.

As to quaternary structure, homo- and heterodimer with other ZFHD proteins.

It localises to the nucleus. Functionally, putative transcription factor. The polypeptide is Zinc-finger homeodomain protein 6 (ZHD6) (Oryza sativa subsp. japonica (Rice)).